A 409-amino-acid polypeptide reads, in one-letter code: uncharacterized protein (409 aa).

The HTH arsR-type domain occupies 305–409 (LTKIDEKVVK…LIGEDDELEM (105 aa)).

This is an uncharacterized protein from Methanocaldococcus jannaschii (strain ATCC 43067 / DSM 2661 / JAL-1 / JCM 10045 / NBRC 100440) (Methanococcus jannaschii).